The primary structure comprises 208 residues: UPF0711 protein C18orf21 homolog (208 aa).

Over residues 123 to 137 (SKHKSTPGSASKHRT) the composition is skewed to basic residues. Disordered regions lie at residues 123-180 (SKHK…KSSP) and 189-208 (MLEN…LSSL). Polar residues predominate over residues 138–152 (PQTVNWATPKSVANR). Over residues 153–180 (TPSSTPRSASSNTSSSSSSKSSSVKSSP) the composition is skewed to low complexity.

Belongs to the UPF0711 family.

The chain is UPF0711 protein C18orf21 homolog from Danio rerio (Zebrafish).